The sequence spans 474 residues: MAGKTLYSKLWDIHEVARRDDGSSLIYIDRHILHEVTSPQAFEGLRLAGRPLWRVNANIATPDHNVPTTKAERQGSLLSIADTVSRLQVQTLDENCDDFGIFEFKMNDVRQGIVHVIGPEQGATLPGMTVVCGDSHTSTHGAFGALAHGIGTSEVEHVLATQCLVTQKMKNMQVRVEGTLPWGVTAKDIVLALIGKIGTAGGNGYAVEFSGSTIRALSMEGRMTICNMAIEAGARVGMVAVDEKTIQYVHGRPFAPKGSDWDAAVAFWRGLVSDPDAHFDRVVELSAEEIKPQVTWGTSPEMVSAVDQSVPDPERETDPVKKESLIRALKYMGLQPNDPITSIKLDRVFIGSCTNSRIEDLRAAAEVVKGRKVASTVKQAMVVPGSGLVKAQAEVEGLDKIFIEAGFEWREPGCSMCLAMNPDKLGSGEHCASTSNRNFEGRQGIGGRTHLVSPAMAAAAAVAGHFVDVREMMR.

[4Fe-4S] cluster-binding residues include cysteine 353, cysteine 414, and cysteine 417.

Belongs to the aconitase/IPM isomerase family. LeuC type 1 subfamily. Heterodimer of LeuC and LeuD. It depends on [4Fe-4S] cluster as a cofactor.

It carries out the reaction (2R,3S)-3-isopropylmalate = (2S)-2-isopropylmalate. The protein operates within amino-acid biosynthesis; L-leucine biosynthesis; L-leucine from 3-methyl-2-oxobutanoate: step 2/4. In terms of biological role, catalyzes the isomerization between 2-isopropylmalate and 3-isopropylmalate, via the formation of 2-isopropylmaleate. In Xylella fastidiosa (strain 9a5c), this protein is 3-isopropylmalate dehydratase large subunit.